Consider the following 706-residue polypeptide: DNA ligase (706 aa).

Positions 1-20 (MSATAGTADESGVASAAASA) are disordered. Residues 50 to 54 (DAEYD), 99 to 100 (SL), and E128 each bind NAD(+). K130 functions as the N6-AMP-lysine intermediate in the catalytic mechanism. Positions 151, 188, 304, and 328 each coordinate NAD(+). Positions 422, 425, 440, and 446 each coordinate Zn(2+). Positions 604 to 694 (EGPRPLDGVT…VDAASKLAVP (91 aa)) constitute a BRCT domain.

Belongs to the NAD-dependent DNA ligase family. LigA subfamily. The cofactor is Mg(2+). It depends on Mn(2+) as a cofactor.

The enzyme catalyses NAD(+) + (deoxyribonucleotide)n-3'-hydroxyl + 5'-phospho-(deoxyribonucleotide)m = (deoxyribonucleotide)n+m + AMP + beta-nicotinamide D-nucleotide.. Functionally, DNA ligase that catalyzes the formation of phosphodiester linkages between 5'-phosphoryl and 3'-hydroxyl groups in double-stranded DNA using NAD as a coenzyme and as the energy source for the reaction. It is essential for DNA replication and repair of damaged DNA. This is DNA ligase from Frankia casuarinae (strain DSM 45818 / CECT 9043 / HFP020203 / CcI3).